The sequence spans 38 residues: Alpha-conotoxin PeIA (38 aa).

The propeptide occupies 1-21 (FDGRNAAANDKASDLVALTVR). 2 disulfide bridges follow: Cys23–Cys29 and Cys24–Cys37. The tract at residues 25–27 (SHP) is ser-Xaa-Pro motif, crucial for potent interaction with nAChR. Position 37 is a cysteine amide (Cys37).

It belongs to the conotoxin A superfamily. In terms of processing, the hydroxylation at position Pro-27 is critical, since an hydroxylation at this position decreases potency of the toxin to inhibit both alpha-3-beta-2 (1300-fold) and alpha-6/alpha-3-beta-2-beta-3 (130-fold) nAChRs. Post-translationally, a non-modified residue at position Pro-34 is critical, since a hydroxylation at this position decreases potency of the toxin to inhibit alpha-3-beta-2 (1-45-fold) and increases potency to inhibit alpha-6/alpha-3-beta-2-beta-3 (1.77-fold) nAChRs. As to expression, expressed by the venom duct.

Its subcellular location is the secreted. Functionally, alpha-conotoxins act on postsynaptic membranes, they bind to the nicotinic acetylcholine receptors (nAChR) and thus inhibit them. This synthetic peptide potently and reversibly blocks alpha-9-alpha-10/CHRNA9-CHRNA10 nAChR (IC(50)=6.9-54.9 nM), alpha-3-beta-2/CHRNA3-CHRNB2 (IC(50)=9.7-97.5 nM) and alpha-6/alpha-3-beta-2-beta-3 (CHRNA6/CHRNA3-CHRNB2-CHRNB3) (IC(50)=11.1-17.2 nM). It also inhibits alpha-6/alpha-3-beta-4 (CHRNA6/CHRNA3-CHRNB4) nAChR with a higher potency on human (IC(50)=6.75 nM) than on rat receptors (IC(50)=130-147 nM). Also shows a weak ability to inhibit alpha-3-beta-4/CHRNA3-CHRNB4 (IC(50)=480-1500 nM). This synthetic toxin also inhibits N-type calcium channels (Ca2.2/CACNA1B) (IC(50)=1.1 nM) via the activation of the G protein-coupled GABA(B) receptor in DRG neurons. Also exhibits inhibition of D.melanogaster alpha-7/CHRNA7 nAChRs. In Conus pergrandis (Grand cone), this protein is Alpha-conotoxin PeIA.